The chain runs to 207 residues: Ribonuclease HII (207 aa).

The 188-residue stretch at 20-207 folds into the RNase H type-2 domain; the sequence is QLFAGVDEVG…KPVKRVLGIE (188 aa). Aspartate 26, glutamate 27, and aspartate 118 together coordinate a divalent metal cation.

This sequence belongs to the RNase HII family. It depends on Mn(2+) as a cofactor. The cofactor is Mg(2+).

It localises to the cytoplasm. It catalyses the reaction Endonucleolytic cleavage to 5'-phosphomonoester.. Endonuclease that specifically degrades the RNA of RNA-DNA hybrids. The polypeptide is Ribonuclease HII (Aliivibrio fischeri (strain MJ11) (Vibrio fischeri)).